The primary structure comprises 45 residues: Large ribosomal subunit protein bL34 (45 aa).

Residues 1 to 24 (MTKRTFGGTSRKRKRVSGFRVRMR) are disordered. A compositionally biased stretch (basic residues) spans 10–24 (SRKRKRVSGFRVRMR).

This sequence belongs to the bacterial ribosomal protein bL34 family.

The polypeptide is Large ribosomal subunit protein bL34 (Prochlorococcus marinus (strain MIT 9303)).